A 503-amino-acid polypeptide reads, in one-letter code: Probable cytosol aminopeptidase (503 aa).

Residues K270 and D275 each coordinate Mn(2+). Residue K282 is part of the active site. Positions 293, 352, and 354 each coordinate Mn(2+). Residue R356 is part of the active site.

It belongs to the peptidase M17 family. Mn(2+) serves as cofactor.

The protein localises to the cytoplasm. It catalyses the reaction Release of an N-terminal amino acid, Xaa-|-Yaa-, in which Xaa is preferably Leu, but may be other amino acids including Pro although not Arg or Lys, and Yaa may be Pro. Amino acid amides and methyl esters are also readily hydrolyzed, but rates on arylamides are exceedingly low.. It carries out the reaction Release of an N-terminal amino acid, preferentially leucine, but not glutamic or aspartic acids.. Its function is as follows. Presumably involved in the processing and regular turnover of intracellular proteins. Catalyzes the removal of unsubstituted N-terminal amino acids from various peptides. The chain is Probable cytosol aminopeptidase from Yersinia enterocolitica serotype O:8 / biotype 1B (strain NCTC 13174 / 8081).